Here is a 604-residue protein sequence, read N- to C-terminus: MQFLLWSTGLVALLSWLIYTQETQSASCRCRPWESCWPSEELWNSFNTSVDGKLHRLRPAAHVCYGPSFNRSACDNILLLSRDSGWRASNPGVLQDWVWEAGETANESCPVGSLRTASAVNSCHQGRIPLFTVGVESTKQVQEAVRFARKHKLRLVIRNTGHDLAGRSSAPDSFQIHTHRLQEIQFHADMRLDGSNTSLGPAVTVGAGVMMGDLYAQAARHGYMVLGGDCPTVGVVGGFLQGGGISDFLSLNQGFGVDNVLEYEVVTADGELVVANALQNQDLFWALRGGGGGTFGVVTRATMRVFPDVPVVISEILLEAPQAISSSWTQGLSIVLTALQSLNHDNVGGQLVIAVLPNLAVQASIKFFFLDATEAAVIDRRMKPFLTKLSRANVKYTYSSKNLPHFSSNYRQVPDIHSDNDYGVLGSTVAISQQLFDSPQGPEKVAKALANLPVSAGDLIFTSNLGGRVIRNGELAETSMHPAWRSASQLINYVHTVEPSIEGRAKARERLTNTQMPMLYALDPNIKLSYRNVGDPNEKDFQQIYWGPNYGRLSNIKKKWDTDDLFFSKLGVGSERWDSEESDEVYFFSYFYLEGINTLKVARR.

Positions 1–25 (MQFLLWSTGLVALLSWLIYTQETQS) are cleaved as a signal peptide. Residues N47, N70, N106, and N196 are each glycosylated (N-linked (GlcNAc...) asparagine). Positions 125 to 308 (QGRIPLFTVG…TRATMRVFPD (184 aa)) constitute an FAD-binding PCMH-type domain.

Belongs to the oxygen-dependent FAD-linked oxidoreductase family. FAD is required as a cofactor.

It participates in alkaloid biosynthesis; ergot alkaloid biosynthesis. FAD-linked oxidoreductase; part of the gene cluster that mediates the biosynthesis of fungal ergot alkaloid. DmaW catalyzes the first step of ergot alkaloid biosynthesis by condensing dimethylallyl diphosphate (DMAP) and tryptophan to form 4-dimethylallyl-L-tryptophan. The second step is catalyzed by the methyltransferase easF that methylates 4-dimethylallyl-L-tryptophan in the presence of S-adenosyl-L-methionine, resulting in the formation of 4-dimethylallyl-L-abrine. The catalase easC and the FAD-dependent oxidoreductase easE then transform 4-dimethylallyl-L-abrine to chanoclavine-I which is further oxidized by easD in the presence of NAD(+), resulting in the formation of chanoclavine-I aldehyde. Chanoclavine-I aldehyde is the precursor of ergoamides and ergopeptines in Clavicipitaceae, and clavine-type alcaloids such as fumiclavine in Trichocomaceae. However, the metabolites downstream of chanoclavine-I aldehyde in Arthrodermataceae have not been identified yet. This is FAD-linked oxidoreductase easE from Trichophyton verrucosum (strain HKI 0517).